Here is an 82-residue protein sequence, read N- to C-terminus: Opistoporin-1 (82 aa).

The first 22 residues, 1–22, serve as a signal peptide directing secretion; sequence MNRKLLFVTLMVTMLVMQPSEG. The propeptide occupies 67-82; the sequence is EAGQMPFDEFMDILYE.

In terms of tissue distribution, expressed by the venom gland.

It is found in the secreted. Its subcellular location is the target cell membrane. In terms of biological role, at high concentrations, acts as a pore former in cellular membranes and causes the leakage of the cells. At submicromolar concentrations, degranulates granulocytes and has a weak hemolytic activity against human erythrocytes. Also strongly inhibits the production of superoxide anions. Has a strong antibacterial activity against Gram-negative bacteria but is less active against Gram-positive bacteria. Also has antifungal activity. In Opistophthalmus carinatus (African yellow leg scorpion), this protein is Opistoporin-1.